Reading from the N-terminus, the 388-residue chain is Transposase for insertion sequence element IS406 (388 aa).

The protein belongs to the transposase mutator family.

In terms of biological role, required for the transposition of the insertion element. This Burkholderia multivorans (strain ATCC 17616 / 249) protein is Transposase for insertion sequence element IS406.